A 205-amino-acid chain; its full sequence is Large ribosomal subunit protein uL3 (205 aa).

A disordered region spans residues 126 to 150; that stretch reads GGPKTHGQSDRHRAPGSISSTTTPG.

Belongs to the universal ribosomal protein uL3 family. As to quaternary structure, part of the 50S ribosomal subunit. Forms a cluster with proteins L14 and L19.

In terms of biological role, one of the primary rRNA binding proteins, it binds directly near the 3'-end of the 23S rRNA, where it nucleates assembly of the 50S subunit. The chain is Large ribosomal subunit protein uL3 from Dehalococcoides mccartyi (strain ATCC BAA-2266 / KCTC 15142 / 195) (Dehalococcoides ethenogenes (strain 195)).